The primary structure comprises 307 residues: Ribosomal RNA small subunit methyltransferase H (307 aa).

Residues 34 to 36, Asp53, Leu88, Asp102, and Gln109 each bind S-adenosyl-L-methionine; that span reads GGH.

It belongs to the methyltransferase superfamily. RsmH family.

It is found in the cytoplasm. It carries out the reaction cytidine(1402) in 16S rRNA + S-adenosyl-L-methionine = N(4)-methylcytidine(1402) in 16S rRNA + S-adenosyl-L-homocysteine + H(+). Its function is as follows. Specifically methylates the N4 position of cytidine in position 1402 (C1402) of 16S rRNA. This Sulfurimonas denitrificans (strain ATCC 33889 / DSM 1251) (Thiomicrospira denitrificans (strain ATCC 33889 / DSM 1251)) protein is Ribosomal RNA small subunit methyltransferase H.